Reading from the N-terminus, the 442-residue chain is Urokinase-type plasminogen activator (442 aa).

The first 20 residues, 1–20 (MRVLRACLSLCVLVVSDSKG), serve as a signal peptide directing secretion. The EGF-like domain occupies 29–65 (GASNCGCLNGGKCVSYKYFSNIQRCSCPKKFQGEHCE). Intrachain disulfides connect Cys-33–Cys-41, Cys-35–Cys-53, Cys-55–Cys-64, Cys-72–Cys-153, Cys-93–Cys-135, Cys-124–Cys-148, Cys-179–Cys-310, Cys-220–Cys-236, Cys-228–Cys-299, Cys-324–Cys-393, Cys-356–Cys-372, and Cys-383–Cys-411. Residues 36-59 (LNGGKCVSYKYFSNIQRCSCPKKF) are binds urokinase plasminogen activator surface receptor. Residues 72–153 (CFEGNGHSYR…LVQECMVPNC (82 aa)) form the Kringle domain. Residue Asn-152 is glycosylated (N-linked (GlcNAc...) asparagine). Residues 154–189 (SGGESHRPAYDGKNPFSTPEKVEFQCGQKALRPRFK) form a connecting peptide region. Residues 190–435 (IVGGKSTTIE…FLTWIHTHVG (246 aa)) form the Peptidase S1 domain. Residues His-235 and Asp-286 each act as charge relay system in the active site. Ser-387 functions as the Charge relay system in the catalytic mechanism.

This sequence belongs to the peptidase S1 family. As to quaternary structure, found in high and low molecular mass forms. Each consists of two chains, A and B. The high molecular mass form contains a long chain A which is cleaved to yield a short chain A. Forms heterodimer with SERPINA5. Binds LRP1B; binding is followed by internalization and degradation. Interacts with MRC2. Interacts with PLAUR. In complex with SERPINE1, interacts with PLAUR/uPAR. Interacts with SORL1 and LRP1, either alone or in complex with SERPINE1; these interactions are abolished in the presence of LRPAP1/RAP. The ternary complex composed of PLAUR-PLAU-PAI1 also interacts with SORLA. In terms of processing, produced as an inactive single-chain protein (pro-uPA or sc-uPA), is processed into the active disulfide-linked two-chain form of PLAU/uPA by a proteolytic event mediated, at least, by TMPRSS4.

It is found in the secreted. The catalysed reaction is Specific cleavage of Arg-|-Val bond in plasminogen to form plasmin.. Its activity is regulated as follows. Inhibited by SERPINA5. Inhibited by SERPINE1. In terms of biological role, specifically cleaves the zymogen plasminogen to form the active enzyme plasmin. This is Urokinase-type plasminogen activator (PLAU) from Sus scrofa (Pig).